A 957-amino-acid polypeptide reads, in one-letter code: MTQTLSQLENRGAFIERHIGPDAAQQQEMLNAVGAESLNALTGQIVPKDIQLATPPQVGEAATEYAALAELKAIAGRNKRFTSYIGMGYTAVQLPPVILRNMLENPGWYTAYTPYQPEVSQGRLEALLNFQQVTLDLTGLDMASASLLDEATAAAEAMAMAKRVSKLKNANRFFVAADVHPQTLDVVRTRAKTFGFDVIVDDADKVLDHQDVFGVLLQQVGTTGEIHDYGTLISELKARKVIVSVAADFMALVLLTAPGKQGADIVFGSAQRFGVPMGYGGPHAAFFAAKDEFKRSMPGRIIGVSKDAAGNTALRMAMQTREQHIRREKANSNICTSQVLLANIASLYAVYHGPVGLKRIANRIHRLTDILAAGLQQKGLKLRHAHYFDTLCVEVADKAAVLARAEAAEINLRSDIHNAVGITLDETTTRENVAQLFNVLLGDSHGLNIETLDKDVALDSRSIQQGMLRDDAILTHPVFNRYHSETEMMRYMHSLERKDLALNQAMIPLGSCTMKLNAAAEMIPITWPEFAELHPFCPPEQAEGYHQMISQLSDWLVKLTGYDAVCMQPNSGAQGEYAGLLAIRHYHGSRNEGHRDICLIPASAHGTNPASAHMAGMQVVVVACDKNGNIDLDDLRAKAEQHAANLSCIMVTYPSTHGVYEETIREVCEVVHQFGGQVYLDGANMNAQVGITSPGFIGADVSHLNLHKTFCIPHGGGGPGMGPIGVKAHLAPFVPGHSVVQIEGMLTRQGAVSAAPFGSASILPISWMYIRMMGAEGLKQASQVAILNANYIASRLKDAYPVLYTGRDGRVAHECILDIRPLKEETGISELDIAKRLIDYGFHAPTMSFPVAGTLMVEPTESEGKAELDRFIDAMLAIRAEIDQVKAGVWPLEDNPLVNAPHIQSELVAEWAHPYSREVAVFPAGVADKYWPTVKRLDDVYGDRNLFCSCVPISDYQ.

Lys-708 is subject to N6-(pyridoxal phosphate)lysine.

Belongs to the GcvP family. As to quaternary structure, the glycine cleavage system is composed of four proteins: P, T, L and H. The cofactor is pyridoxal 5'-phosphate.

It carries out the reaction N(6)-[(R)-lipoyl]-L-lysyl-[glycine-cleavage complex H protein] + glycine + H(+) = N(6)-[(R)-S(8)-aminomethyldihydrolipoyl]-L-lysyl-[glycine-cleavage complex H protein] + CO2. Its function is as follows. The glycine cleavage system catalyzes the degradation of glycine. The P protein binds the alpha-amino group of glycine through its pyridoxal phosphate cofactor; CO(2) is released and the remaining methylamine moiety is then transferred to the lipoamide cofactor of the H protein. In Salmonella typhi, this protein is Glycine dehydrogenase (decarboxylating).